We begin with the raw amino-acid sequence, 160 residues long: Ureidoglycolate lyase (160 aa).

The protein belongs to the ureidoglycolate lyase family. In terms of assembly, homodimer. Ni(2+) is required as a cofactor.

The enzyme catalyses (S)-ureidoglycolate = urea + glyoxylate. It functions in the pathway nitrogen metabolism; (S)-allantoin degradation. Functionally, catalyzes the catabolism of the allantoin degradation intermediate (S)-ureidoglycolate, generating urea and glyoxylate. Involved in the utilization of allantoin as nitrogen source. This is Ureidoglycolate lyase from Salmonella typhimurium (strain LT2 / SGSC1412 / ATCC 700720).